The following is a 445-amino-acid chain: Gamma-glutamyl phosphate reductase (445 aa).

It belongs to the gamma-glutamyl phosphate reductase family.

It is found in the cytoplasm. It carries out the reaction L-glutamate 5-semialdehyde + phosphate + NADP(+) = L-glutamyl 5-phosphate + NADPH + H(+). It functions in the pathway amino-acid biosynthesis; L-proline biosynthesis; L-glutamate 5-semialdehyde from L-glutamate: step 2/2. Its function is as follows. Catalyzes the NADPH-dependent reduction of L-glutamate 5-phosphate into L-glutamate 5-semialdehyde and phosphate. The product spontaneously undergoes cyclization to form 1-pyrroline-5-carboxylate. The protein is Gamma-glutamyl phosphate reductase of Saccharopolyspora erythraea (strain ATCC 11635 / DSM 40517 / JCM 4748 / NBRC 13426 / NCIMB 8594 / NRRL 2338).